The primary structure comprises 789 residues: Potassium transporter 4 (789 aa).

Topologically, residues 1–32 (MAPAESGVSPRRNPSQLSWMNLSSNLILAYQS) are cytoplasmic. S9 carries the phosphoserine modification. The helical transmembrane segment at 33 to 53 (FGVVYGDLSTSPLYVFPSTFI) threads the bilayer. Residues 54–68 (GKLHKHHNEDAVFGA) lie on the Extracellular side of the membrane. A helical membrane pass occupies residues 69 to 89 (FSLIFWTLTLIPLLKYLLVLL). Residues 90 to 154 (SADDNGEGGT…FLEKHKRLRT (65 aa)) lie on the Cytoplasmic side of the membrane. Residues 155 to 175 (ALLLVVLFGAAMVIGDGVLTP) traverse the membrane as a helical segment. The Extracellular portion of the chain corresponds to 176-195 (ALSVLSSLSGLQATEKNVTD). A helical transmembrane segment spans residues 196–216 (GELLVLACVILVGLFALQHCG). Over 217-219 (THR) the chain is Cytoplasmic. Residues 220–240 (VAFMFAPIVIIWLISIFFIGL) traverse the membrane as a helical segment. At 241-270 (YNIIRWNPKIIHAVSPLYIIKFFRVTGQDG) the chain is on the extracellular side. The helical transmembrane segment at 271–291 (WISLGGVLLSVTGTEAMFANL) threads the bilayer. Residues 292-300 (GHFTSVSIR) are Cytoplasmic-facing. A helical transmembrane segment spans residues 301-321 (VAFAVVVYPCLVVQYMGQAAF). Over 322-340 (LSKNLGSIPNSFYDSVPDP) the chain is Extracellular. The chain crosses the membrane as a helical span at residues 341–361 (VFWPVFVIATLAAIVGSQAVI). The Cytoplasmic portion of the chain corresponds to 362 to 392 (TTTFSIIKQCHALGCFPRIKVVHTSKHIYGQ). A helical transmembrane segment spans residues 393 to 413 (IYIPEINWILMILTLAMAIGF). The Extracellular portion of the chain corresponds to 414 to 424 (RDTTLIGNAYG). The helical transmembrane segment at 425–445 (IACMVVMFITTFFMALVIVVV) threads the bilayer. Topologically, residues 446-450 (WQKSC) are cytoplasmic. The chain crosses the membrane as a helical span at residues 451–471 (FLAALFLGTLWIIEGVYLSAA). The Extracellular portion of the chain corresponds to 472 to 478 (LMKVTEG). A helical membrane pass occupies residues 479–499 (GWVPFVLTFIFMIAMYVWHYG). Topologically, residues 500 to 789 (TRRKYSFDLH…LIEVGMIYYV (290 aa)) are cytoplasmic.

It belongs to the HAK/KUP transporter (TC 2.A.72.3) family. Detected at very low levels in roots, stems, leaves and flowers of mature plants and strongly expressed in the roots of potassium-starved plants.

The protein resides in the cell membrane. High-affinity potassium transporter. In Arabidopsis thaliana (Mouse-ear cress), this protein is Potassium transporter 4 (POT4).